We begin with the raw amino-acid sequence, 167 residues long: Lipoprotein signal peptidase (167 aa).

3 consecutive transmembrane segments (helical) span residues 9 to 29 (AWLYLSIAVSVFLLDIITKNL), 68 to 88 (LPLLLITPVIALIITFLYALY), and 98 to 118 (MGLIGGGALGNLYDRLFLGMV). Residues aspartate 120 and aspartate 138 contribute to the active site. The chain crosses the membrane as a helical span at residues 130 to 150 (YWPAFNIADASISIGIALLIL).

It belongs to the peptidase A8 family.

It localises to the cell inner membrane. It carries out the reaction Release of signal peptides from bacterial membrane prolipoproteins. Hydrolyzes -Xaa-Yaa-Zaa-|-(S,diacylglyceryl)Cys-, in which Xaa is hydrophobic (preferably Leu), and Yaa (Ala or Ser) and Zaa (Gly or Ala) have small, neutral side chains.. Its pathway is protein modification; lipoprotein biosynthesis (signal peptide cleavage). Its function is as follows. This protein specifically catalyzes the removal of signal peptides from prolipoproteins. This chain is Lipoprotein signal peptidase, found in Aquifex aeolicus (strain VF5).